A 553-amino-acid chain; its full sequence is 5'-nucleotidase (553 aa).

Residues 1–21 (MKQRLIVKTALSAAILATLAG) form the signal peptide. Cys22 carries the N-palmitoyl cysteine lipid modification. Residue Cys22 is the site of S-diacylglycerol cysteine attachment. Residues Asp45, His47, Asp88, Asn120, His221, His256, and Gln258 each contribute to the a divalent metal cation site. Substrate-binding positions include Phe432 and 501–507 (YNAAGGD).

The protein belongs to the 5'-nucleotidase family. Requires chloride as cofactor. It depends on Mg(2+) as a cofactor.

The protein localises to the cell outer membrane. It catalyses the reaction a ribonucleoside 5'-phosphate + H2O = a ribonucleoside + phosphate. Its function is as follows. Degradation of extracellular 5'-nucleotides for nutritional needs. This Vibrio vulnificus (strain CMCP6) protein is 5'-nucleotidase (nutA).